A 306-amino-acid chain; its full sequence is Glutamyl-Q tRNA(Asp) synthetase (306 aa).

Residues 29–33 (RFAPS) and Asp-65 contribute to the L-glutamate site. The 'HIGH' region signature appears at 32–42 (PSPTGPLHLGN). Positions 121, 123, 141, and 145 each coordinate Zn(2+). Positions 188 and 206 each coordinate L-glutamate. Residues 244-248 (KLAKR) carry the 'KMSKS' region motif. Residue Lys-247 coordinates ATP.

The protein belongs to the class-I aminoacyl-tRNA synthetase family. GluQ subfamily. Zn(2+) is required as a cofactor.

Catalyzes the tRNA-independent activation of glutamate in presence of ATP and the subsequent transfer of glutamate onto a tRNA(Asp). Glutamate is transferred on the 2-amino-5-(4,5-dihydroxy-2-cyclopenten-1-yl) moiety of the queuosine in the wobble position of the QUC anticodon. The polypeptide is Glutamyl-Q tRNA(Asp) synthetase (Prochlorococcus marinus (strain MIT 9303)).